Consider the following 103-residue polypeptide: Large ribosomal subunit protein bL21 (103 aa).

Belongs to the bacterial ribosomal protein bL21 family. Part of the 50S ribosomal subunit. Contacts protein L20.

Its function is as follows. This protein binds to 23S rRNA in the presence of protein L20. In Psychromonas ingrahamii (strain DSM 17664 / CCUG 51855 / 37), this protein is Large ribosomal subunit protein bL21.